We begin with the raw amino-acid sequence, 166 residues long: Thioredoxin, mitochondrial (166 aa).

Residues 1 to 59 (MAQRLLLRRFLTSIISGKPSQSRWAPVASRALQTPQYSPGYLTVTPSQARSIYTTRVCS) constitute a mitochondrion transit peptide. The Thioredoxin domain occupies 61 to 166 (TFNIQDGPDF…LEAFLKKLIG (106 aa)). Residues Cys90 and Cys93 each act as nucleophile in the active site. A disulfide bridge connects residues Cys90 and Cys93. Lys152 bears the N6-acetyllysine; alternate mark. Residue Lys152 is modified to N6-succinyllysine; alternate.

It belongs to the thioredoxin family. As to quaternary structure, monomer.

The protein resides in the mitochondrion. In terms of biological role, important for the control of mitochondrial reactive oxygen species homeostasis, apoptosis regulation and cell viability. Is involved in various redox reactions including the reduction of protein disulfide bonds, through the reversible oxidation of its active center dithiol to a disulfide. The protein is Thioredoxin, mitochondrial (TXN2) of Bos taurus (Bovine).